A 262-amino-acid chain; its full sequence is Thiamine thiazole synthase (262 aa).

NAD(+) contacts are provided by residues S40, 59-60 (ER), G67, V133, and 159-161 (HID). Fe cation-binding residues include D161 and H176. The NAD(+) site is built by S179 and M226. R236 contacts glycine.

It belongs to the THI4 family. As to quaternary structure, homooctamer; tetramer of dimers. Fe(2+) is required as a cofactor.

The enzyme catalyses hydrogen sulfide + glycine + NAD(+) = ADP-5-ethyl-4-methylthiazole-2-carboxylate + nicotinamide + 3 H2O + H(+). The protein operates within cofactor biosynthesis; thiamine diphosphate biosynthesis. Functionally, involved in the biosynthesis of the thiazole moiety of thiamine. Catalyzes the conversion of NAD and glycine to adenosine diphosphate 5-(2-hydroxyethyl)-4-methylthiazole-2-carboxylate (ADT), an adenylated thiazole intermediate, using free sulfide as a source of sulfur. In Methanococcus maripaludis (strain C7 / ATCC BAA-1331), this protein is Thiamine thiazole synthase.